A 239-amino-acid polypeptide reads, in one-letter code: Ribonuclease 3 (239 aa).

The region spanning 12 to 137 is the RNase III domain; sequence RAKLESLIGH…LIAAIYLDGG (126 aa). Residue Glu50 participates in Mg(2+) binding. Asp54 is an active-site residue. 2 residues coordinate Mg(2+): Asp123 and Glu126. Glu126 is an active-site residue. Residues 162–231 enclose the DRBM domain; sequence DAKTELQEWS…ATKMLEREGI (70 aa).

It belongs to the ribonuclease III family. In terms of assembly, homodimer. Mg(2+) is required as a cofactor.

It is found in the cytoplasm. It catalyses the reaction Endonucleolytic cleavage to 5'-phosphomonoester.. Functionally, digests double-stranded RNA. Involved in the processing of primary rRNA transcript to yield the immediate precursors to the large and small rRNAs (23S and 16S). Processes some mRNAs, and tRNAs when they are encoded in the rRNA operon. Processes pre-crRNA and tracrRNA of type II CRISPR loci if present in the organism. This Rhizobium etli (strain CIAT 652) protein is Ribonuclease 3.